We begin with the raw amino-acid sequence, 159 residues long: NADH-quinone oxidoreductase subunit B (159 aa).

[4Fe-4S] cluster-binding residues include Cys-32, Cys-33, Cys-97, and Cys-126.

It belongs to the complex I 20 kDa subunit family. NDH-1 is composed of 14 different subunits. Subunits NuoB, C, D, E, F, and G constitute the peripheral sector of the complex. [4Fe-4S] cluster serves as cofactor.

It is found in the cell inner membrane. It carries out the reaction a quinone + NADH + 5 H(+)(in) = a quinol + NAD(+) + 4 H(+)(out). NDH-1 shuttles electrons from NADH, via FMN and iron-sulfur (Fe-S) centers, to quinones in the respiratory chain. The immediate electron acceptor for the enzyme in this species is believed to be ubiquinone. Couples the redox reaction to proton translocation (for every two electrons transferred, four hydrogen ions are translocated across the cytoplasmic membrane), and thus conserves the redox energy in a proton gradient. The sequence is that of NADH-quinone oxidoreductase subunit B from Helicobacter pylori (strain J99 / ATCC 700824) (Campylobacter pylori J99).